Consider the following 475-residue polypeptide: uncharacterized protein (475 aa).

A helical transmembrane segment spans residues 19 to 39 (IKVGVFFVAILLILTGILLTI). Disordered stretches follow at residues 55 to 79 (GEYH…NATS) and 330 to 350 (SSPF…PHKG). The span at 60–79 (LNTSPNENSTALQPDENATS) shows a compositional bias: polar residues. The span at 336–348 (NRRHPVTGRIRPH) shows a compositional bias: basic residues. His-348 serves as a coordination point for Zn(2+).

In the central section; belongs to the OapA family. It in the C-terminal section; belongs to the peptidase M23B family. Requires Zn(2+) as cofactor.

The protein resides in the cell membrane. This is an uncharacterized protein from Haemophilus influenzae (strain ATCC 51907 / DSM 11121 / KW20 / Rd).